Consider the following 385-residue polypeptide: Acetate kinase (385 aa).

Residue N8 coordinates Mg(2+). K15 provides a ligand contact to ATP. R85 lines the substrate pocket. D142 serves as the catalytic Proton donor/acceptor. Residues 200–204 (HLGNG), 275–277 (DMR), and 323–327 (GIGEN) contribute to the ATP site. E373 lines the Mg(2+) pocket.

It belongs to the acetokinase family. Homodimer. Mg(2+) is required as a cofactor. It depends on Mn(2+) as a cofactor.

It is found in the cytoplasm. It carries out the reaction acetate + ATP = acetyl phosphate + ADP. It participates in metabolic intermediate biosynthesis; acetyl-CoA biosynthesis; acetyl-CoA from acetate: step 1/2. In terms of biological role, catalyzes the formation of acetyl phosphate from acetate and ATP. Can also catalyze the reverse reaction. This is Acetate kinase from Francisella tularensis subsp. holarctica (strain OSU18).